Reading from the N-terminus, the 543-residue chain is Excitatory amino acid transporter 1 (543 aa).

Topologically, residues 1–47 (MTKSNGEEPRMGGRMERLQQGVRKRTLLAKKKVQSLTKEDVKSYLFR) are cytoplasmic. A helical membrane pass occupies residues 48–68 (NAFVLLTVTAVIVGTILGFAL). Residues 69-86 (RPYKMSYREVKYFSFPGE) are Extracellular-facing. Residues 87-108 (LLMRMLQMLVLPLIISSLVTGM) form a helical membrane-spanning segment. Residues 109–122 (AALDSKASGKMGMR) lie on the Cytoplasmic side of the membrane. Residues 123-145 (AVVYYMTTTIIAVVIGIIIVIII) traverse the membrane as a helical segment. Residues 146-236 (HPGKGTKENM…IREEMVPVPG (91 aa)) are Extracellular-facing. N-linked (GlcNAc...) asparagine glycans are attached at residues N206 and N216. The chain crosses the membrane as a helical span at residues 237-260 (SVNGVNALGLVVFSMCFGFVIGNM). The Cytoplasmic portion of the chain corresponds to 261 to 269 (KEQGQALRE). Residues 270-297 (FFDSLNEAIMRLVAVIMWYAPLGILFLI) traverse the membrane as a helical segment. Over 298-318 (AGKIVEMEDMGVIGGQLAMYT) the chain is Extracellular. Residues 319–340 (VTVIVGLLIHAVIVLPLLYFLV) traverse the membrane as a helical segment. At 341 to 345 (TRKNP) the chain is on the cytoplasmic side. The segment at residues 346–376 (WVFIGGLLQALITALGTSSSSATLPITFKCL) is an intramembrane region (discontinuously helical). 363 to 365 (SSS) is an L-aspartate binding site. Topologically, residues 377 to 385 (EENNGVDKR) are cytoplasmic. The helical transmembrane segment at 386–412 (ITRFVLPVGATINMDGTALYEALAAIF) threads the bilayer. 3 residues coordinate Na(+): G394, T396, and N398. T402 contacts L-aspartate. At 413–425 (IAQVNNFDLNFGQ) the chain is on the extracellular side. The segment at residues 426 to 459 (IITISITATAASIGAAGIPQAGLVTMVIVLTSVG) is an intramembrane region (discontinuously helical). 443 to 447 (IPQAG) contacts L-aspartate. Topologically, residues 460–472 (LPTDDITLIIAVD) are extracellular. A helical transmembrane segment spans residues 473 to 494 (WFLDRLRTTTNVLGDSLGAGIV). Positions 476 and 483 each coordinate L-aspartate. Residues N483 and D487 each coordinate Na(+). Residues 495–543 (EHLSRHELKNRDVEMGNSVIEENEMKKPYQLIAQDNEPEKPVADSETKM) are Cytoplasmic-facing. S512 bears the Phosphoserine mark. Residues 522 to 543 (PYQLIAQDNEPEKPVADSETKM) form a disordered region. A compositionally biased stretch (basic and acidic residues) spans 531 to 543 (EPEKPVADSETKM).

It belongs to the dicarboxylate/amino acid:cation symporter (DAACS) (TC 2.A.23) family. SLC1A3 subfamily. Homotrimer. Glycosylated. In terms of tissue distribution, detected in brain, in Bergmann glia arborising into the molecular layer of the cerebellum (at protein level). Localized in brain and is highly enriched in the Purkinje cell layer in cerebellum. Intermediate level in lung, low level in spleen, skeletal muscle and testis.

It localises to the cell membrane. It carries out the reaction K(+)(in) + L-glutamate(out) + 3 Na(+)(out) + H(+)(out) = K(+)(out) + L-glutamate(in) + 3 Na(+)(in) + H(+)(in). It catalyses the reaction K(+)(in) + L-aspartate(out) + 3 Na(+)(out) + H(+)(out) = K(+)(out) + L-aspartate(in) + 3 Na(+)(in) + H(+)(in). The catalysed reaction is D-aspartate(out) + K(+)(in) + 3 Na(+)(out) + H(+)(out) = D-aspartate(in) + K(+)(out) + 3 Na(+)(in) + H(+)(in). Sodium-dependent, high-affinity amino acid transporter that mediates the uptake of L-glutamate and also L-aspartate and D-aspartate. Functions as a symporter that transports one amino acid molecule together with two or three Na(+) ions and one proton, in parallel with the counter-transport of one K(+) ion. Plays a redundant role in the rapid removal of released glutamate from the synaptic cleft, which is essential for terminating the postsynaptic action of glutamate. This Mus musculus (Mouse) protein is Excitatory amino acid transporter 1 (Slc1a3).